The sequence spans 432 residues: UDP-N-acetylmuramate--L-alanine ligase (432 aa).

109–115 (GAHGKST) serves as a coordination point for ATP.

It belongs to the MurCDEF family.

The protein localises to the cytoplasm. The catalysed reaction is UDP-N-acetyl-alpha-D-muramate + L-alanine + ATP = UDP-N-acetyl-alpha-D-muramoyl-L-alanine + ADP + phosphate + H(+). Its pathway is cell wall biogenesis; peptidoglycan biosynthesis. Its function is as follows. Cell wall formation. This Campylobacter jejuni subsp. jejuni serotype O:2 (strain ATCC 700819 / NCTC 11168) protein is UDP-N-acetylmuramate--L-alanine ligase.